A 276-amino-acid chain; its full sequence is Putative olfactory receptor 10J6 (276 aa).

Residues 1-25 (MRRKNLTEVTEFVFLGFSRFHKHHI) are Extracellular-facing. N-linked (GlcNAc...) asparagine glycosylation occurs at asparagine 5. Residues 26-46 (TLFVVFLILYTLTVAGNAIIM) traverse the membrane as a helical segment. Residues 47-54 (TIICIDRH) are Cytoplasmic-facing. A helical transmembrane segment spans residues 55-75 (LHTPMYFFLSMLASSKTVYTL). The Extracellular segment spans residues 76 to 99 (FIIPQMLSSFVTQTQPISLAGCTT). A disulfide bond links cysteine 97 and cysteine 188. A helical membrane pass occupies residues 100-120 (QTFFFVTLAINNCFLLTVMGY). Residues 121 to 139 (DHYMAICNPLRYRVITSKK) lie on the Cytoplasmic side of the membrane. The helical transmembrane segment at 140–160 (VCVQLVCGAFSIGLAMAAVQV) threads the bilayer. Topologically, residues 161-196 (TSIFTLPFCHTVVGHFFCDILPVMKLSCINTTINEI) are extracellular. The N-linked (GlcNAc...) asparagine glycan is linked to asparagine 190. The chain crosses the membrane as a helical span at residues 197 to 216 (INFVVRLFVILVPMGLVFIS). Residues 217-236 (YVLIISTVLKIASAEGWKKT) are Cytoplasmic-facing. Residues 237–257 (FATCAFHLTVVIVHYGCASIA) form a helical membrane-spanning segment. At 258 to 270 (YLMPKSENSIEQD) the chain is on the extracellular side. A helical membrane pass occupies residues 271 to 276 (LLLSVT).

Belongs to the G-protein coupled receptor 1 family.

It localises to the cell membrane. Odorant receptor. This is Putative olfactory receptor 10J6 (OR10J6P) from Homo sapiens (Human).